A 380-amino-acid polypeptide reads, in one-letter code: Cytochrome b (380 aa).

4 helical membrane-spanning segments follow: residues 34–54, 78–99, 114–134, and 179–199; these read FGSL…LLAA, WLLR…YLHI, WNTG…GYVL, and FFAL…IHLT. Heme b is bound by residues H84 and H98. Heme b is bound by residues H183 and H197. Residue H202 coordinates a ubiquinone. The next 4 helical transmembrane spans lie at 227–247, 289–309, 321–341, and 348–368; these read LKDI…ALFH, LGGV…PFLH, LSQL…WIGS, and FIII…VLFP.

The protein belongs to the cytochrome b family. As to quaternary structure, the cytochrome bc1 complex contains 11 subunits: 3 respiratory subunits (MT-CYB, CYC1 and UQCRFS1), 2 core proteins (UQCRC1 and UQCRC2) and 6 low-molecular weight proteins (UQCRH/QCR6, UQCRB/QCR7, UQCRQ/QCR8, UQCR10/QCR9, UQCR11/QCR10 and a cleavage product of UQCRFS1). This cytochrome bc1 complex then forms a dimer. Requires heme b as cofactor.

The protein resides in the mitochondrion inner membrane. In terms of biological role, component of the ubiquinol-cytochrome c reductase complex (complex III or cytochrome b-c1 complex) that is part of the mitochondrial respiratory chain. The b-c1 complex mediates electron transfer from ubiquinol to cytochrome c. Contributes to the generation of a proton gradient across the mitochondrial membrane that is then used for ATP synthesis. This is Cytochrome b (MT-CYB) from Trogon curucui (Blue-crowned trogon).